The primary structure comprises 123 residues: Nitrogenase-stabilizing/protective protein NifW (123 aa).

This sequence belongs to the NifW family. As to quaternary structure, homotrimer; associates with NifD.

May protect the nitrogenase Fe-Mo protein from oxidative damage. The polypeptide is Nitrogenase-stabilizing/protective protein NifW (Rhodopseudomonas palustris (strain HaA2)).